Reading from the N-terminus, the 487-residue chain is ATP synthase subunit beta (487 aa).

Position 164-171 (164-171 (GGAGVGKT)) interacts with ATP.

This sequence belongs to the ATPase alpha/beta chains family. In terms of assembly, F-type ATPases have 2 components, CF(1) - the catalytic core - and CF(0) - the membrane proton channel. CF(1) has five subunits: alpha(3), beta(3), gamma(1), delta(1), epsilon(1). CF(0) has four main subunits: a(1), b(1), b'(1) and c(9-12).

Its subcellular location is the cellular thylakoid membrane. It carries out the reaction ATP + H2O + 4 H(+)(in) = ADP + phosphate + 5 H(+)(out). Its function is as follows. Produces ATP from ADP in the presence of a proton gradient across the membrane. The catalytic sites are hosted primarily by the beta subunits. The chain is ATP synthase subunit beta from Synechococcus sp. (strain CC9311).